The sequence spans 556 residues: MDFGFFPGDLRQRGSFTDLGFNGFPLTSSVSNGFHFSGDRTTNPFLNLRKLDTTSLMADGVDMGLCQNLSKMSISDERSNFFNHSSFSGYGCYQGRESSFHGEASSSMRGFVGYGDVHRFEQDLRVRASFHGESAMSSYVGDGSDYHRLRFLALQEASNPNPRCFTENMSLLNRDYMLELEHFNQQIRRDFSLVPQKSPLAFHEERILPPFSAMGGSRELDGSAKCMKNKEDSLDLASMVDSYGSVYLMAKDQLGCRLLQKFVDEGNFVDVMIIFKEVINNVIELGTDPFGNYLIQKLIEVCNEEQRTQILIRLTSKPGLLVKISINNYGTRVVQKLIETVTTKEQISLVKSALVPGFLSLFRELNGNHVILNCLKFFSPNDNKFILEAATKFCIEIATTRHGCCVLQRCVSYSVGEQHEKLVDEISRNSLLLAQDPFGNYLVQYIIEKKVGGVNVLFELRGNYVKLATQKFGSHVVEKCLRYYPESRSQIVNELVSVLNFGYLLQDPYANYVIQCALSKTKGFVRASLVEKVRRYENLKMTPYCKRIFSKNLWKK.

Residues 215–556 (GGSRELDGSA…RIFSKNLWKK (342 aa)) form the PUM-HD domain. Pumilio repeat units lie at residues 238-276 (SMVD…IIFK), 277-313 (EVIN…ILIR), 316-351 (SKPG…SLVK), 353-388 (ALVP…FILE), 389-424 (AATK…KLVD), 425-459 (EISR…VLFE), 460-495 (LRGN…VNEL), and 496-531 (VSVL…SLVE).

It is found in the cytoplasm. Sequence-specific RNA-binding protein that regulates translation and mRNA stability by binding the 3'-UTR of target mRNAs. The chain is Pumilio homolog 11 (APUM11) from Arabidopsis thaliana (Mouse-ear cress).